We begin with the raw amino-acid sequence, 307 residues long: Methionyl-tRNA formyltransferase (307 aa).

Residue Ser108–Pro111 coordinates (6S)-5,6,7,8-tetrahydrofolate.

This sequence belongs to the Fmt family.

The enzyme catalyses L-methionyl-tRNA(fMet) + (6R)-10-formyltetrahydrofolate = N-formyl-L-methionyl-tRNA(fMet) + (6S)-5,6,7,8-tetrahydrofolate + H(+). Functionally, attaches a formyl group to the free amino group of methionyl-tRNA(fMet). The formyl group appears to play a dual role in the initiator identity of N-formylmethionyl-tRNA by promoting its recognition by IF2 and preventing the misappropriation of this tRNA by the elongation apparatus. In Stenotrophomonas maltophilia (strain R551-3), this protein is Methionyl-tRNA formyltransferase.